The following is a 399-amino-acid chain: Zinc finger TRAF-type-containing protein 1 (399 aa).

Over residues 1-13 the composition is skewed to gly residues; that stretch reads MSGAEEAGGGGPA. Residues 1-21 form a disordered region; it reads MSGAEEAGGGGPAAGPAGAVP. The segment at 106–151 adopts an RING-type; degenerate zinc-finger fold; sequence CTVCLDLPKASVYQCTNGHLMCAGCFIHLLADARLKEEQATCPNCR. A TRAF-type zinc finger spans residues 152-210; it reads CEISKSLCCRNLAVEKAVSELPSECGFCLRQFPRSLLERHQKEECQDRVTQCKYKRIGC.

The protein belongs to the ZFTRAF1 family. Interacts with LGALS3. Expressed in heart, brain, liver, testis and kidney.

Its subcellular location is the cytoplasm. The protein localises to the perinuclear region. This Mus musculus (Mouse) protein is Zinc finger TRAF-type-containing protein 1.